We begin with the raw amino-acid sequence, 98 residues long: Sarcosine oxidase subunit delta (98 aa).

Residues cysteine 6, cysteine 9, histidine 59, and cysteine 63 each contribute to the Zn(2+) site.

This sequence belongs to the SoxD family. As to quaternary structure, heterotetramer composed of subunits alpha (SoxA), beta (SoxB), gamma (SoxG) and delta (SoxD).

It localises to the cytoplasm. The enzyme catalyses sarcosine + (6S)-5,6,7,8-tetrahydrofolate + O2 = (6R)-5,10-methylene-5,6,7,8-tetrahydrofolate + glycine + H2O2. It carries out the reaction sarcosine + O2 + H2O = formaldehyde + glycine + H2O2. In the presence of tetrahydrofolate, catalyzes the oxidative demethylation of sarcosine to yield glycine, 5,10-methylenetetrahydrofolate and hydrogen peroxide. In the absence of tetrahydrofolate, catalyzes the oxidative demethylation of sarcosine to yield glycine, formaldehyde and hydrogen peroxide. The protein is Sarcosine oxidase subunit delta of Corynebacterium sp. (strain P-1).